A 259-amino-acid polypeptide reads, in one-letter code: Pimeloyl-[acyl-carrier protein] methyl ester esterase (259 aa).

An AB hydrolase-1 domain is found at 16-244 (LVFIHGWGLN…ASHAPFLSHP (229 aa)). Substrate is bound by residues Trp22, 82 to 83 (SL), and 143 to 147 (FFNIQ). Catalysis depends on Ser82, which acts as the Nucleophile. Active-site residues include Asp207 and His237. His237 contacts substrate.

The protein belongs to the AB hydrolase superfamily. Carboxylesterase BioH family. As to quaternary structure, monomer.

It localises to the cytoplasm. The enzyme catalyses 6-carboxyhexanoyl-[ACP] methyl ester + H2O = 6-carboxyhexanoyl-[ACP] + methanol + H(+). The protein operates within cofactor biosynthesis; biotin biosynthesis. In terms of biological role, the physiological role of BioH is to remove the methyl group introduced by BioC when the pimeloyl moiety is complete. It allows to synthesize pimeloyl-ACP via the fatty acid synthetic pathway through the hydrolysis of the ester bonds of pimeloyl-ACP esters. The protein is Pimeloyl-[acyl-carrier protein] methyl ester esterase of Wigglesworthia glossinidia brevipalpis.